A 164-amino-acid polypeptide reads, in one-letter code: Phosphopantetheine adenylyltransferase (164 aa).

Ser-10 is a binding site for substrate. ATP-binding positions include Ser-10–Phe-11 and His-18. Substrate is bound by residues Lys-42, Thr-79, and Arg-93. Residues Gly-94–Arg-96, Glu-104, and Val-129–Thr-135 each bind ATP.

Belongs to the bacterial CoaD family. In terms of assembly, homohexamer. The cofactor is Mg(2+).

Its subcellular location is the cytoplasm. The catalysed reaction is (R)-4'-phosphopantetheine + ATP + H(+) = 3'-dephospho-CoA + diphosphate. Its pathway is cofactor biosynthesis; coenzyme A biosynthesis; CoA from (R)-pantothenate: step 4/5. Functionally, reversibly transfers an adenylyl group from ATP to 4'-phosphopantetheine, yielding dephospho-CoA (dPCoA) and pyrophosphate. The polypeptide is Phosphopantetheine adenylyltransferase (Bradyrhizobium sp. (strain BTAi1 / ATCC BAA-1182)).